The sequence spans 378 residues: Beta-1,3-N-acetylglucosaminyltransferase lunatic fringe (378 aa).

Residues 1-8 are Cytoplasmic-facing; it reads MLQRCGRR. Residues 9 to 29 form a helical; Signal-anchor for type II membrane protein membrane-spanning segment; that stretch reads LLLALVGALLACLLVLTADPP. Residues 30–378 lie on the Lumenal side of the membrane; the sequence is PTPMPAERGR…TPWCPRSAIF (349 aa). Positions 85-108 are disordered; the sequence is RDADPPPGVASRQGDGHPRPPAEV. Residue Arg-128 participates in substrate binding. Asn-166 is a glycosylation site (N-linked (GlcNAc...) asparagine). Disulfide bonds link Cys-167-Cys-178 and Cys-196-Cys-259. Position 200 (Asp-200) interacts with substrate. Residue Asp-201 participates in Mn(2+) binding. Asp-289 is a catalytic residue. His-313 is a binding site for Mn(2+). Residues Cys-363 and Cys-372 are joined by a disulfide bond.

This sequence belongs to the glycosyltransferase 31 family. The cofactor is Mn(2+). Co(2+) is required as a cofactor. Post-translationally, a soluble form may be derived from the membrane form by proteolytic processing. Detected at 12.5 dpc in all tissues examined with the highest level observed in adult brain and spleen. Detected in the dental epithelium.

It localises to the golgi apparatus. The protein resides in the golgi apparatus membrane. The enzyme catalyses 3-O-(alpha-L-fucosyl)-L-threonyl-[EGF-like domain protein] + UDP-N-acetyl-alpha-D-glucosamine = 3-O-(N-acetyl-beta-D-glucosaminyl-(1-&gt;3)-alpha-L-fucosyl)-L-threonyl-[EGF-like domain protein] + UDP + H(+). It carries out the reaction 3-O-(alpha-L-fucosyl)-L-seryl-[EGF-like domain protein] + UDP-N-acetyl-alpha-D-glucosamine = 3-O-(N-acetyl-beta-D-glucosaminyl-(1-&gt;3)-alpha-L-fucosyl)-L-seryl-[EGF-like domain protein] + UDP + H(+). Functionally, glycosyltransferase that initiates the elongation of O-linked fucose residues attached to EGF-like repeats in the extracellular domain of Notch molecules. Modulates NOTCH1 activity by modifying O-fucose residues at specific EGF-like domains resulting in inhibition of NOTCH1 activation by JAG1 and enhancement of NOTCH1 activation by DLL1 via an increase in its binding to DLL1. Decreases the binding of JAG1 to NOTCH2 but not that of DLL1. Essential mediator of somite segmentation and patterning. During somite boundary formation, it restricts Notch activity in the presomitic mesoderm to a boundary-forming territory in the posterior half of the prospective somite. In this region, Notch function activates a set of genes that are involved in boundary formation and in anterior-posterior somite identity. Ectopically expressed in the thymus, Lfgn inhibits Notch signaling which results in inhibition of T-cell commitment and promotes B-cell development in lymphoid progenitors. May play a role in boundary formation of the enamel knot. This Mus musculus (Mouse) protein is Beta-1,3-N-acetylglucosaminyltransferase lunatic fringe.